The following is a 71-amino-acid chain: General transcription and DNA repair factor IIH subunit TFB5 (71 aa).

This sequence belongs to the TFB5 family. In terms of assembly, component of the 7-subunit TFIIH core complex composed of XPB, XPD, TFB1/GTF2H1, GTF2H2/P44, TFB4/GTF2H3, TFB2/GTF2H4 and TFB5/GTF2H5, which is active in NER. The core complex associates with the 3-subunit CDK-activating kinase (CAK) module composed of CYCH1/cyclin H1, CDKD and MAT1/At4g30820 to form the 10-subunit holoenzyme (holo-TFIIH) active in transcription.

The protein localises to the nucleus. Component of the general transcription and DNA repair factor IIH (TFIIH) core complex, which is involved in general and transcription-coupled nucleotide excision repair (NER) of damaged DNA and, when complexed to CAK, in RNA transcription by RNA polymerase II. In NER, TFIIH acts by opening DNA around the lesion to allow the excision of the damaged oligonucleotide and its replacement by a new DNA fragment. In transcription, TFIIH has an essential role in transcription initiation. When the pre-initiation complex (PIC) has been established, TFIIH is required for promoter opening and promoter escape. Phosphorylation of the C-terminal tail (CTD) of the largest subunit of RNA polymerase II by the kinase module CAK controls the initiation of transcription. In Arabidopsis thaliana (Mouse-ear cress), this protein is General transcription and DNA repair factor IIH subunit TFB5.